Here is a 456-residue protein sequence, read N- to C-terminus: Glycine--tRNA ligase (456 aa).

Substrate is bound by residues arginine 98 and glutamate 168. Residues 200 to 202 (RNE), 210 to 215 (FRTREF), 285 to 286 (EL), and 329 to 332 (GVER) contribute to the ATP site. 215 to 219 (FEQME) lines the substrate pocket. Residue 325–329 (EPSVG) coordinates substrate.

It belongs to the class-II aminoacyl-tRNA synthetase family. Homodimer.

Its subcellular location is the cytoplasm. The catalysed reaction is tRNA(Gly) + glycine + ATP = glycyl-tRNA(Gly) + AMP + diphosphate. In terms of biological role, catalyzes the attachment of glycine to tRNA(Gly). In Mycoplasma mycoides subsp. mycoides SC (strain CCUG 32753 / NCTC 10114 / PG1), this protein is Glycine--tRNA ligase.